The following is a 615-amino-acid chain: DNA mismatch repair protein MutL (615 aa).

Residues 362 to 397 (HFAEPAVREPVAPRYSPAPASGSRPAAPWPNAQPGY) are disordered. Residues 373–387 (APRYSPAPASGSRPA) are compositionally biased toward low complexity.

Belongs to the DNA mismatch repair MutL/HexB family.

Functionally, this protein is involved in the repair of mismatches in DNA. It is required for dam-dependent methyl-directed DNA mismatch repair. May act as a 'molecular matchmaker', a protein that promotes the formation of a stable complex between two or more DNA-binding proteins in an ATP-dependent manner without itself being part of a final effector complex. In Escherichia coli O81 (strain ED1a), this protein is DNA mismatch repair protein MutL.